Here is a 213-residue protein sequence, read N- to C-terminus: Small ribosomal subunit protein uS4 (213 aa).

A disordered region spans residues 16-53; that stretch reads GTDLGLKSGVKPYDVKTKKSARPPGQHGVSRNKSSEYS. Over residues 44-53 the composition is skewed to polar residues; the sequence is VSRNKSSEYS. Residues 97 to 163 form the S4 RNA-binding domain; sequence SRLDNVVYRM…EKSREQLRIK (67 aa).

Belongs to the universal ribosomal protein uS4 family. In terms of assembly, part of the 30S ribosomal subunit. Contacts protein S5. The interaction surface between S4 and S5 is involved in control of translational fidelity.

Functionally, one of the primary rRNA binding proteins, it binds directly to 16S rRNA where it nucleates assembly of the body of the 30S subunit. With S5 and S12 plays an important role in translational accuracy. The polypeptide is Small ribosomal subunit protein uS4 (Psychrobacter cryohalolentis (strain ATCC BAA-1226 / DSM 17306 / VKM B-2378 / K5)).